Reading from the N-terminus, the 236-residue chain is 2-C-methyl-D-erythritol 4-phosphate cytidylyltransferase (236 aa).

The protein belongs to the IspD/TarI cytidylyltransferase family. IspD subfamily. Homodimer.

The catalysed reaction is 2-C-methyl-D-erythritol 4-phosphate + CTP + H(+) = 4-CDP-2-C-methyl-D-erythritol + diphosphate. It functions in the pathway isoprenoid biosynthesis; isopentenyl diphosphate biosynthesis via DXP pathway; isopentenyl diphosphate from 1-deoxy-D-xylulose 5-phosphate: step 2/6. Catalyzes the formation of 4-diphosphocytidyl-2-C-methyl-D-erythritol from CTP and 2-C-methyl-D-erythritol 4-phosphate (MEP). This is 2-C-methyl-D-erythritol 4-phosphate cytidylyltransferase from Escherichia coli O17:K52:H18 (strain UMN026 / ExPEC).